A 425-amino-acid chain; its full sequence is MAASSTRLRCLYASSSTWKTSPSQSLISLSRRYATTSSAPPTPSDESSSTLPKRRKTTTFKDKLNAGPSFADFVSGNGDSNNAPLDASEAYALETVMIPGPAGRGKKEHTRLPSWLKTPIPDSTNYKRIKKDLRGLKLNTVCEEARCPNISDCWGGSDKSAATATIMLMGDSCTRGCRFCSVKTLRTPGPLDPHEPENTAEALSRWGLGYVVLTSVDRDDLSDGGAHHFAETVIKIKQKAPGILVECLTGDFAGDFDMVALVAKSGLDVYAHNVETVEALTPHVRDRRATFQQSLRVLEAAKRAKPSLITKTSMMLGFGETEDQMWDALRQLRASNVDVVTFGQYMRPTKRHMAVHEYVTPDKFELWRQRALEMGFLYVASGPLVRSSYKAGEAFIENVLKKRRGVGNTPGAEVTTEVPVDALAK.

Residues 1–33 (MAASSTRLRCLYASSSTWKTSPSQSLISLSRRY) constitute a mitochondrion transit peptide. The interval 17 to 55 (TWKTSPSQSLISLSRRYATTSSAPPTPSDESSSTLPKRR) is disordered. A compositionally biased stretch (polar residues) spans 33-51 (YATTSSAPPTPSDESSSTL). [4Fe-4S] cluster contacts are provided by C142, C147, C153, C173, C177, C180, and S388. In terms of domain architecture, Radical SAM core spans 156–377 (GSDKSAATAT…RQRALEMGFL (222 aa)).

Belongs to the radical SAM superfamily. Lipoyl synthase family. [4Fe-4S] cluster is required as a cofactor.

Its subcellular location is the mitochondrion. The enzyme catalyses [[Fe-S] cluster scaffold protein carrying a second [4Fe-4S](2+) cluster] + N(6)-octanoyl-L-lysyl-[protein] + 2 oxidized [2Fe-2S]-[ferredoxin] + 2 S-adenosyl-L-methionine + 4 H(+) = [[Fe-S] cluster scaffold protein] + N(6)-[(R)-dihydrolipoyl]-L-lysyl-[protein] + 4 Fe(3+) + 2 hydrogen sulfide + 2 5'-deoxyadenosine + 2 L-methionine + 2 reduced [2Fe-2S]-[ferredoxin]. It participates in protein modification; protein lipoylation via endogenous pathway; protein N(6)-(lipoyl)lysine from octanoyl-[acyl-carrier-protein]: step 2/2. Its function is as follows. Catalyzes the radical-mediated insertion of two sulfur atoms into the C-6 and C-8 positions of the octanoyl moiety bound to the lipoyl domains of lipoate-dependent enzymes, thereby converting the octanoylated domains into lipoylated derivatives. This is Lipoyl synthase, mitochondrial from Talaromyces marneffei (strain ATCC 18224 / CBS 334.59 / QM 7333) (Penicillium marneffei).